A 558-amino-acid polypeptide reads, in one-letter code: Energy-dependent translational throttle protein EttA (558 aa).

2 consecutive ABC transporter domains span residues 6–256 (YTMK…AVQG) and 322–552 (VEVD…RVTH). Residue 38-45 (GPNGAGKS) participates in ATP binding. The interval 94–136 (GDIKIKLDRFNEVAELMATDYTDELMEEMGRLQEELDHADAWD) is arm. The interval 239–320 (GNYSTYLEKK…IPVGPRLGNV (82 aa)) is ptIM. Residue 354 to 361 (GPNGVGKT) coordinates ATP.

Belongs to the ABC transporter superfamily. ABCF family. Translational throttle EttA subfamily. Monomer. Probably contacts ribosomal proteins L1, L5, L33 and S7, the 16S and 23S rRNA and the P-site containing tRNA(fMet).

It localises to the cytoplasm. It catalyses the reaction ATP + H2O = ADP + phosphate + H(+). Functionally, a translation factor that gates the progression of the 70S ribosomal initiation complex (IC, containing tRNA(fMet) in the P-site) into the translation elongation cycle by using a mechanism sensitive to the ATP/ADP ratio. Binds to the 70S ribosome E-site where it modulates the state of the translating ribosome during subunit translocation. ATP hydrolysis probably frees it from the ribosome, which can enter the elongation phase. The sequence is that of Energy-dependent translational throttle protein EttA from Mycobacterium tuberculosis (strain CDC 1551 / Oshkosh).